A 424-amino-acid polypeptide reads, in one-letter code: Inhibin beta A chain (424 aa).

Residues 1–20 (MPLLWLRGFLLASCWIIVRS) form the signal peptide. Residues 21 to 308 (SPTPGSEGHG…EDHPHRRRRR (288 aa)) constitute a propeptide that is removed on maturation. Asparagine 165 carries N-linked (GlcNAc...) asparagine glycosylation. The span at 264–275 (EVDGDGKKKDGS) shows a compositional bias: basic and acidic residues. A disordered region spans residues 264–306 (EVDGDGKKKDGSDGGLEEEKEQSHRPFLMLQARQSEDHPHRRR). 4 disulfides stabilise this stretch: cysteine 312-cysteine 320, cysteine 319-cysteine 389, cysteine 348-cysteine 421, and cysteine 352-cysteine 423.

This sequence belongs to the TGF-beta family. As to quaternary structure, dimeric, linked by one or more disulfide bonds. Inhibin A is a dimer of alpha/INHA and beta-A/INHBA. Activin A is a homodimer of beta-A/INHBA. Activin AB is a dimer of beta-A/INHBA and beta-B/INHBB. Interacts with FST and FSTL3; these interactions prevent activin A interaction to its type II receptor. Activin A interacts with ACVR2A. Activin A interacts with BMPR2. Inhibin A interacts with ACVR1; this interaction creates a non-signaling complex (NSC) that inhibits ACVR1-mediated BMP signaling. Inhibin A interacts with ACVR2A.

The protein localises to the secreted. Functionally, inhibins/activins are involved in regulating a number of diverse functions such as hypothalamic and pituitary hormone secretion, gonadal hormone secretion, germ cell development and maturation, erythroid differentiation, insulin secretion, nerve cell survival, embryonic axial development or bone growth, depending on their subunit composition. In terms of biological role, activin A is a homodimer of INHBA that plays a role in several essential biological processes including embryonic development, stem cell maintenance and differentiation, haematopoiesis, cell proliferation and tissue fibrosis. Signals through type I (such as ACVR1B or ACVR1C) and type II receptors (such as ACVR2A, ACVR2B or BMPR2) which, upon ligand binding, phosphorylate SMAD2 and SMAD3 intracellular signaling mediators that form a complex with SMAD4, translocate to the nucleus and modulate gene expression. Can also activate alternative non-canonical intracellular signaling pathways including the p38 MAPK, extracellular signal-regulated kinases 1/2 (ERK1/2) and c-Jun N-terminal kinases (JNKs) to modulate cell migration and differentiation. Alternatively, promotes osteoblastic differentiation via ACVRL1-SMAD1/5/9 pathway. In addition, can engage the type I receptor ACVR1 to form an ACVR1-activin A-type II receptor non-signaling complex (NSC) that renders receptors unavailable for engagement with BMPs, hence resulting in an apparent inhibition of ACVR1-mediated BMP signaling. Its function is as follows. Inhibin A is a dimer of alpha/INHA and beta-A/INHBA that functions as a feedback regulator in the hypothalamic-pituitary-gonadal (HPG) axis. Inhibits the secretion of FSH from the anterior pituitary gland by acting on pituitary gonadotrope cells. Antagonizes activin A by binding to the proteoglycan, betaglycan, and forming a stable complex with and, thereby, sequestering type II activin receptors while excluding type I receptor. This is Inhibin beta A chain (Inhba) from Rattus norvegicus (Rat).